The primary structure comprises 287 residues: Phosphate transport system permease protein PstA (287 aa).

6 helical membrane passes run 22–42 (ISCI…WTLI), 70–90 (AFLG…PVGI), 115–135 (ILLS…YVMH), 138–158 (GHFS…PIVV), 199–219 (ILTG…PLLF), and 255–275 (LLAW…SLGA). Residues 71–279 (FLGSAIMCLL…LVSLGARALL (209 aa)) enclose the ABC transmembrane type-1 domain.

It belongs to the binding-protein-dependent transport system permease family. CysTW subfamily.

It localises to the cell inner membrane. Functionally, part of a binding-protein-dependent transport system for phosphate; probably responsible for the translocation of the substrate across the membrane. The sequence is that of Phosphate transport system permease protein PstA (pstA) from Xylella fastidiosa (strain Temecula1 / ATCC 700964).